The following is a 366-amino-acid chain: NAD(P)H-quinone oxidoreductase subunit 1, chloroplastic (366 aa).

Helical transmembrane passes span 28–48, 105–125, 128–148, 250–270, 271–291, 303–323, and 346–366; these read IWLLVPIFTPLLGIIIGVLVI, IAVISILLSYSVIPFGYHLVL, LSIGVFLWIAISSIAPIGLLM, SGIKFGLFYVASYLNLLVSSL, FVTVLYLGGWNLSIPYIFIFI, IFGMTIGIFITLAKAYLFLFI, and FLLPISLGNLLLTTSFQLLSL.

This sequence belongs to the complex I subunit 1 family. NDH is composed of at least 16 different subunits, 5 of which are encoded in the nucleus.

The protein localises to the plastid. The protein resides in the chloroplast thylakoid membrane. The enzyme catalyses a plastoquinone + NADH + (n+1) H(+)(in) = a plastoquinol + NAD(+) + n H(+)(out). It catalyses the reaction a plastoquinone + NADPH + (n+1) H(+)(in) = a plastoquinol + NADP(+) + n H(+)(out). NDH shuttles electrons from NAD(P)H:plastoquinone, via FMN and iron-sulfur (Fe-S) centers, to quinones in the photosynthetic chain and possibly in a chloroplast respiratory chain. The immediate electron acceptor for the enzyme in this species is believed to be plastoquinone. Couples the redox reaction to proton translocation, and thus conserves the redox energy in a proton gradient. In Nandina domestica (Heavenly bamboo), this protein is NAD(P)H-quinone oxidoreductase subunit 1, chloroplastic.